The primary structure comprises 432 residues: Proline--tRNA ligase (432 aa).

This sequence belongs to the class-II aminoacyl-tRNA synthetase family. ProS type 2 subfamily. Homodimer.

Its subcellular location is the cytoplasm. It catalyses the reaction tRNA(Pro) + L-proline + ATP = L-prolyl-tRNA(Pro) + AMP + diphosphate. Functionally, catalyzes the attachment of proline to tRNA(Pro) in a two-step reaction: proline is first activated by ATP to form Pro-AMP and then transferred to the acceptor end of tRNA(Pro). The polypeptide is Proline--tRNA ligase (Rickettsia bellii (strain OSU 85-389)).